The primary structure comprises 156 residues: Phosphopantetheine adenylyltransferase (156 aa).

Residue Thr9 coordinates substrate. Residues 9–10 and His17 each bind ATP; that span reads TF. Residues Lys41, Leu73, and Arg87 each coordinate substrate. ATP is bound by residues 88 to 90, Glu98, and 123 to 129; these read GVR and WAFVSST.

This sequence belongs to the bacterial CoaD family. Homohexamer. It depends on Mg(2+) as a cofactor.

It is found in the cytoplasm. The catalysed reaction is (R)-4'-phosphopantetheine + ATP + H(+) = 3'-dephospho-CoA + diphosphate. It functions in the pathway cofactor biosynthesis; coenzyme A biosynthesis; CoA from (R)-pantothenate: step 4/5. Its function is as follows. Reversibly transfers an adenylyl group from ATP to 4'-phosphopantetheine, yielding dephospho-CoA (dPCoA) and pyrophosphate. This Haemophilus influenzae (strain ATCC 51907 / DSM 11121 / KW20 / Rd) protein is Phosphopantetheine adenylyltransferase.